The chain runs to 242 residues: Myogenic factor 6 (242 aa).

A disordered region spans residues 31–63; that stretch reads SPLYPGSDGTLSPCQDQMPPEAGSDSSGEEHVL. One can recognise a bHLH domain in the interval 93-144; that stretch reads DRRKAATLRERRRLKKINEAFEALKRRTVANPNQRLPKVEILRSAINYIERL.

As to quaternary structure, efficient DNA binding requires dimerization with another bHLH protein.

The protein localises to the nucleus. Functionally, involved in muscle differentiation (myogenic factor). Induces fibroblasts to differentiate into myoblasts. Probable sequence specific DNA-binding protein. The sequence is that of Myogenic factor 6 (MYF6) from Sus scrofa (Pig).